Consider the following 142-residue polypeptide: Large ribosomal subunit protein uL13 (142 aa).

This sequence belongs to the universal ribosomal protein uL13 family. Part of the 50S ribosomal subunit.

This protein is one of the early assembly proteins of the 50S ribosomal subunit, although it is not seen to bind rRNA by itself. It is important during the early stages of 50S assembly. This is Large ribosomal subunit protein uL13 from Ruthia magnifica subsp. Calyptogena magnifica.